Reading from the N-terminus, the 418-residue chain is Putative competence-damage inducible protein (418 aa).

The protein belongs to the CinA family.

This Clostridioides difficile (strain 630) (Peptoclostridium difficile) protein is Putative competence-damage inducible protein.